We begin with the raw amino-acid sequence, 387 residues long: Pepsin-3 (387 aa).

Positions 1–15 (MKWLLLLGLLALSEC) are cleaved as a signal peptide. Residues 16–59 (IIHKVPLVRKKSLRKNLIEKGLLKDYLKTHTPNLATKYLPKAAF) constitute a propeptide, activation peptide. The Peptidase A1 domain occupies 75–384 (YFGTIGIGTP…DRANNQLGLA (310 aa)). Asp93 is an active-site residue. 2 cysteine pairs are disulfide-bonded: Cys106–Cys111 and Cys267–Cys271. The active site involves Asp276. Cys310 and Cys343 are disulfide-bonded.

The protein belongs to the peptidase A1 family.

The protein localises to the secreted. The enzyme catalyses Preferential cleavage: hydrophobic, preferably aromatic, residues in P1 and P1' positions. Cleaves 1-Phe-|-Val-2, 4-Gln-|-His-5, 13-Glu-|-Ala-14, 14-Ala-|-Leu-15, 15-Leu-|-Tyr-16, 16-Tyr-|-Leu-17, 23-Gly-|-Phe-24, 24-Phe-|-Phe-25 and 25-Phe-|-Tyr-26 bonds in the B chain of insulin.. Shows particularly broad specificity; although bonds involving phenylalanine and leucine are preferred, many others are also cleaved to some extent. The polypeptide is Pepsin-3 (Oryctolagus cuniculus (Rabbit)).